A 94-amino-acid polypeptide reads, in one-letter code: Co-chaperonin GroES (94 aa).

The protein belongs to the GroES chaperonin family. As to quaternary structure, heptamer of 7 subunits arranged in a ring. Interacts with the chaperonin GroEL.

It localises to the cytoplasm. In terms of biological role, together with the chaperonin GroEL, plays an essential role in assisting protein folding. The GroEL-GroES system forms a nano-cage that allows encapsulation of the non-native substrate proteins and provides a physical environment optimized to promote and accelerate protein folding. GroES binds to the apical surface of the GroEL ring, thereby capping the opening of the GroEL channel. This is Co-chaperonin GroES from Anoxybacillus flavithermus (strain DSM 21510 / WK1).